We begin with the raw amino-acid sequence, 425 residues long: CinA-like protein (425 aa).

It belongs to the CinA family.

This Trichodesmium erythraeum (strain IMS101) protein is CinA-like protein.